We begin with the raw amino-acid sequence, 461 residues long: Ribitol-5-phosphate transferase FKTN (461 aa).

Residues M1–N7 lie on the Cytoplasmic side of the membrane. Residues K6 to Y27 are required and sufficient for interaction with POMGNT1. A helical; Signal-anchor for type II membrane protein transmembrane segment spans residues V8–Y28. Topologically, residues K29–Y461 are lumenal. N-linked (GlcNAc...) asparagine glycosylation is present at N92.

This sequence belongs to the LicD transferase family. Forms a complex composed of FKTN/fukutin, FKRP and RXYLT1/TMEM5. Interacts (via transmembrane domain) with POMGNT1; the interaction is direct and is required for normal POMGNT1 location in Golgi membranes. In terms of tissue distribution, expressed in the retina (at protein level). Widely expressed with highest expression in brain, heart, pancreas and skeletal muscle. Expressed at similar levels in control fetal and adult brain. Expressed in migrating neurons, including Cajar-Retzius cells and adult cortical neurons, as well as hippocampal pyramidal cells and cerebellar Purkinje cells. No expression observed in the glia limitans, the subpial astrocytes (which contribute to basement membrane formation) or other glial cells.

The protein resides in the golgi apparatus membrane. It localises to the cytoplasm. It is found in the nucleus. The enzyme catalyses 3-O-[beta-D-GalNAc-(1-&gt;3)-beta-D-GlcNAc-(1-&gt;4)-(O-6-P-alpha-D-Man)]-Thr-[protein] + CDP-L-ribitol = 3-O-[Rib-ol-P-3-beta-D-GalNAc-(1-&gt;3)-beta-D-GlcNAc-(1-&gt;4)-(O-6-P-alpha-D-Man)]-Thr-[protein] + CMP + H(+). It functions in the pathway protein modification; protein glycosylation. Functionally, catalyzes the transfer of a ribitol-phosphate from CDP-ribitol to the distal N-acetylgalactosamine of the phosphorylated O-mannosyl trisaccharide (N-acetylgalactosamine-beta-3-N-acetylglucosamine-beta-4-(phosphate-6-)mannose), a carbohydrate structure present in alpha-dystroglycan (DAG1). This constitutes the first step in the formation of the ribitol 5-phosphate tandem repeat which links the phosphorylated O-mannosyl trisaccharide to the ligand binding moiety composed of repeats of 3-xylosyl-alpha-1,3-glucuronic acid-beta-1. Required for normal location of POMGNT1 in Golgi membranes, and for normal POMGNT1 activity. May interact with and reinforce a large complex encompassing the outside and inside of muscle membranes. Could be involved in brain development. The protein is Ribitol-5-phosphate transferase FKTN of Homo sapiens (Human).